Reading from the N-terminus, the 661-residue chain is mRNA 3'-end-processing protein RNA14 (661 aa).

Positions 1 to 29 (MSDGTATPDPLPSSSNTSTSLRPTSRVRD) are disordered. Positions 12–24 (PSSSNTSTSLRPT) are enriched in low complexity. HAT repeat units lie at residues 62–94 (KQWK…LEFD), 99–133 (LDAA…YVRK), 143–179 (EARN…FLEH), 190–223 (QRVQ…WEQD), 264–296 (TLNQ…WESD), and 305–337 (LHKA…YQGE).

It localises to the nucleus. It is found in the cytoplasm. In terms of biological role, component of the cleavage factor IA (CFIA) complex, which is involved in the endonucleolytic cleavage during polyadenylation-dependent pre-mRNA 3'-end formation. This is mRNA 3'-end-processing protein RNA14 (RNA14) from Kluyveromyces lactis (strain ATCC 8585 / CBS 2359 / DSM 70799 / NBRC 1267 / NRRL Y-1140 / WM37) (Yeast).